Reading from the N-terminus, the 327-residue chain is GMP reductase (327 aa).

Cys175 (thioimidate intermediate) is an active-site residue. 204–227 (IIADGGIRTPGDIAKSIRFGATMV) lines the NADP(+) pocket.

This sequence belongs to the IMPDH/GMPR family. GuaC type 2 subfamily.

It catalyses the reaction IMP + NH4(+) + NADP(+) = GMP + NADPH + 2 H(+). In terms of biological role, catalyzes the irreversible NADPH-dependent deamination of GMP to IMP. It functions in the conversion of nucleobase, nucleoside and nucleotide derivatives of G to A nucleotides, and in maintaining the intracellular balance of A and G nucleotides. In Clostridium acetobutylicum (strain ATCC 824 / DSM 792 / JCM 1419 / IAM 19013 / LMG 5710 / NBRC 13948 / NRRL B-527 / VKM B-1787 / 2291 / W), this protein is GMP reductase.